A 134-amino-acid polypeptide reads, in one-letter code: Phospholipase A2 (134 aa).

Ca(2+) contacts are provided by tryptophan 8, glycine 10, and glycine 12. 5 disulfide bridges follow: cysteine 9/cysteine 31, cysteine 30/cysteine 70, cysteine 37/cysteine 63, cysteine 61/cysteine 95, and cysteine 105/cysteine 113. An N-linked (GlcNAc...) asparagine glycan is attached at asparagine 13. Residue histidine 34 is part of the active site. Aspartate 35 is a Ca(2+) binding site. Aspartate 64 is a catalytic residue.

It belongs to the phospholipase A2 family. Group III subfamily. It depends on Ca(2+) as a cofactor. In terms of tissue distribution, expressed by the venom gland.

The protein localises to the secreted. The enzyme catalyses a 1,2-diacyl-sn-glycero-3-phosphocholine + H2O = a 1-acyl-sn-glycero-3-phosphocholine + a fatty acid + H(+). PLA2 catalyzes the calcium-dependent hydrolysis of the 2-acyl groups in 3-sn-phosphoglycerides. This chain is Phospholipase A2, found in Apis cerana cerana (Oriental honeybee).